The primary structure comprises 461 residues: Bifunctional protein GlmU (461 aa).

The interval 1-227 is pyrophosphorylase; that stretch reads MEVIALILAA…PDEVLGVNDR (227 aa). Residues 8–11, K22, Q73, 78–79, 100–102, G137, E152, N167, and N225 contribute to the UDP-N-acetyl-alpha-D-glucosamine site; these read LAAG, GT, and YGD. A Mg(2+)-binding site is contributed by D102. Residue N225 coordinates Mg(2+). Positions 228-248 are linker; the sequence is RQLAELERIYQVHQARALMER. The N-acetyltransferase stretch occupies residues 249 to 461; it reads GVTLRDPARF…EKARKESCAE (213 aa). 2 residues coordinate UDP-N-acetyl-alpha-D-glucosamine: R332 and K350. Residue H362 is the Proton acceptor of the active site. 2 residues coordinate UDP-N-acetyl-alpha-D-glucosamine: Y365 and N376. Residues A379, 385-386, S404, A422, and R439 contribute to the acetyl-CoA site; that span reads NY.

In the N-terminal section; belongs to the N-acetylglucosamine-1-phosphate uridyltransferase family. The protein in the C-terminal section; belongs to the transferase hexapeptide repeat family. As to quaternary structure, homotrimer. Requires Mg(2+) as cofactor.

Its subcellular location is the cytoplasm. The catalysed reaction is alpha-D-glucosamine 1-phosphate + acetyl-CoA = N-acetyl-alpha-D-glucosamine 1-phosphate + CoA + H(+). It carries out the reaction N-acetyl-alpha-D-glucosamine 1-phosphate + UTP + H(+) = UDP-N-acetyl-alpha-D-glucosamine + diphosphate. The protein operates within nucleotide-sugar biosynthesis; UDP-N-acetyl-alpha-D-glucosamine biosynthesis; N-acetyl-alpha-D-glucosamine 1-phosphate from alpha-D-glucosamine 6-phosphate (route II): step 2/2. It participates in nucleotide-sugar biosynthesis; UDP-N-acetyl-alpha-D-glucosamine biosynthesis; UDP-N-acetyl-alpha-D-glucosamine from N-acetyl-alpha-D-glucosamine 1-phosphate: step 1/1. It functions in the pathway bacterial outer membrane biogenesis; LPS lipid A biosynthesis. Functionally, catalyzes the last two sequential reactions in the de novo biosynthetic pathway for UDP-N-acetylglucosamine (UDP-GlcNAc). The C-terminal domain catalyzes the transfer of acetyl group from acetyl coenzyme A to glucosamine-1-phosphate (GlcN-1-P) to produce N-acetylglucosamine-1-phosphate (GlcNAc-1-P), which is converted into UDP-GlcNAc by the transfer of uridine 5-monophosphate (from uridine 5-triphosphate), a reaction catalyzed by the N-terminal domain. This chain is Bifunctional protein GlmU, found in Methylococcus capsulatus (strain ATCC 33009 / NCIMB 11132 / Bath).